A 347-amino-acid chain; its full sequence is Protein RecA (347 aa).

Position 64–71 (64–71) interacts with ATP; it reads GPESSGKT.

It belongs to the RecA family.

Its subcellular location is the cytoplasm. Can catalyze the hydrolysis of ATP in the presence of single-stranded DNA, the ATP-dependent uptake of single-stranded DNA by duplex DNA, and the ATP-dependent hybridization of homologous single-stranded DNAs. It interacts with LexA causing its activation and leading to its autocatalytic cleavage. The polypeptide is Protein RecA (Bacillus velezensis (strain DSM 23117 / BGSC 10A6 / LMG 26770 / FZB42) (Bacillus amyloliquefaciens subsp. plantarum)).